The primary structure comprises 489 residues: Mitochondrial-processing peptidase subunit beta (489 aa).

A mitochondrion-targeting transit peptide spans 1 to 45 (MAAAAVSRTLLPVAGRRLWGFTRRLPLRAAAAQPLYFGGDRLRST). Residue His-101 participates in Zn(2+) binding. Glu-104 acts as the Proton acceptor in catalysis. Zn(2+) contacts are provided by His-105 and Glu-181.

The protein belongs to the peptidase M16 family. Heterodimer of PMPCA (alpha) and PMPCB (beta) subunits, forming the mitochondrial processing protease (MPP) in which PMPCA is involved in substrate recognition and binding and PMPCB is the catalytic subunit. The cofactor is Zn(2+).

Its subcellular location is the mitochondrion matrix. The catalysed reaction is Release of N-terminal transit peptides from precursor proteins imported into the mitochondrion, typically with Arg in position P2.. Binding to PMPCA is required for catalytic activity. In terms of biological role, catalytic subunit of the essential mitochondrial processing protease (MPP), which cleaves the mitochondrial sequence off newly imported precursors proteins. Preferentially, cleaves after an arginine at position P2. Required for PINK1 turnover by coupling PINK1 mitochondrial import and cleavage, which results in subsequent PINK1 proteolysis. This is Mitochondrial-processing peptidase subunit beta (Pmpcb) from Rattus norvegicus (Rat).